We begin with the raw amino-acid sequence, 969 residues long: Protein translocase subunit SecA (969 aa).

ATP-binding positions include Q99, G117–T121, and D631.

This sequence belongs to the SecA family. In terms of assembly, monomer and homodimer. Part of the essential Sec protein translocation apparatus which comprises SecA, SecYEG and auxiliary proteins SecDF. Other proteins may also be involved.

Its subcellular location is the cell inner membrane. The protein localises to the cytoplasm. It catalyses the reaction ATP + H2O + cellular proteinSide 1 = ADP + phosphate + cellular proteinSide 2.. In terms of biological role, part of the Sec protein translocase complex. Interacts with the SecYEG preprotein conducting channel. Has a central role in coupling the hydrolysis of ATP to the transfer of proteins into and across the cell membrane, serving as an ATP-driven molecular motor driving the stepwise translocation of polypeptide chains across the membrane. The chain is Protein translocase subunit SecA from Chlamydia felis (strain Fe/C-56) (Chlamydophila felis).